Consider the following 514-residue polypeptide: 5'-AMP-activated protein kinase subunit gamma-3 (514 aa).

2 disordered regions span residues 1 to 121 (MELA…FPKA) and 134 to 155 (DNPPTERDILPSDCAASASDSN). Residues 59-71 (SRSWPSRAVTTSS) show a composition bias toward polar residues. CBS domains follow at residues 222–283 (MATS…RSPL), 305–363 (CFKP…GTLL), and 380–440 (TFRD…HLDM). ADP is bound by residues Arg250, 265–270 (MLTITD), Val310, 331–332 (HR), and Lys350. AMP-binding positions include Arg250, 265 to 270 (MLTITD), Val310, His331, 331 to 332 (HR), Lys350, Thr380, Ala385, 406 to 407 (SA), 422 to 425 (SRFD), Arg449, Leu457, His478, 478 to 479 (HR), and 494 to 497 (SLSD). ATP is bound by residues Arg250, 265–270 (MLTITD), Val310, 331–332 (HR), Arg332, and Lys350. The short motif at 318–339 (LFEAVYALIKNRIHRLPVLDPV) is the AMPK pseudosubstrate element. ADP-binding positions include 422 to 425 (SRFD), Arg449, Leu457, and 478 to 479 (HR). ATP is bound by residues 422–425 (SRFD), Arg449, Leu457, and 478–479 (HR). The CBS 4 domain occupies 452-511 (CLEGVLSCQPHETLGEVIDRIVREQVHRLVLVDETQHLLGVVSLSDILQALVLSPAGIDA).

Belongs to the 5'-AMP-activated protein kinase gamma subunit family. In terms of assembly, AMPK is a heterotrimer of an alpha catalytic subunit (PRKAA1 or PRKAA2), a beta (PRKAB1 or PRKAB2) and a gamma non-catalytic subunits (PRKAG1, PRKAG2 or PRKAG3). Interacts with FNIP1 and FNIP2. Phosphorylated by ULK1; leading to negatively regulate AMPK activity and suggesting the existence of a regulatory feedback loop between ULK1 and AMPK. Post-translationally, glycosylated; O-GlcNAcylated by OGT, promoting the AMP-activated protein kinase (AMPK) activity. In terms of tissue distribution, muscle.

Functionally, AMP/ATP-binding subunit of AMP-activated protein kinase (AMPK), an energy sensor protein kinase that plays a key role in regulating cellular energy metabolism. In response to reduction of intracellular ATP levels, AMPK activates energy-producing pathways and inhibits energy-consuming processes: inhibits protein, carbohydrate and lipid biosynthesis, as well as cell growth and proliferation. AMPK acts via direct phosphorylation of metabolic enzymes, and by longer-term effects via phosphorylation of transcription regulators. AMPK also acts as a regulator of cellular polarity by remodeling the actin cytoskeleton; probably by indirectly activating myosin. The AMPK gamma3 subunit is a non-catalytic subunit with a regulatory role in muscle energy metabolism. It mediates binding to AMP, ADP and ATP, leading to AMPK activation or inhibition: AMP-binding results in allosteric activation of alpha catalytic subunit (PRKAA1 or PRKAA2) both by inducing phosphorylation and preventing dephosphorylation of catalytic subunits. ADP also stimulates phosphorylation, without stimulating already phosphorylated catalytic subunit. ATP promotes dephosphorylation of catalytic subunit, rendering the AMPK enzyme inactive. The protein is 5'-AMP-activated protein kinase subunit gamma-3 (PRKAG3) of Sus scrofa (Pig).